A 303-amino-acid polypeptide reads, in one-letter code: tRNA pseudouridine synthase B (303 aa).

Asp-47 functions as the Nucleophile in the catalytic mechanism.

The protein belongs to the pseudouridine synthase TruB family. Type 1 subfamily.

The enzyme catalyses uridine(55) in tRNA = pseudouridine(55) in tRNA. Its function is as follows. Responsible for synthesis of pseudouridine from uracil-55 in the psi GC loop of transfer RNAs. In Ruegeria pomeroyi (strain ATCC 700808 / DSM 15171 / DSS-3) (Silicibacter pomeroyi), this protein is tRNA pseudouridine synthase B.